Here is a 111-residue protein sequence, read N- to C-terminus: UPF0060 membrane protein CPR_1507 (111 aa).

Helical transmembrane passes span I7–W27, S33–L53, F60–W80, and I85–I105.

This sequence belongs to the UPF0060 family.

It is found in the cell membrane. The polypeptide is UPF0060 membrane protein CPR_1507 (Clostridium perfringens (strain SM101 / Type A)).